We begin with the raw amino-acid sequence, 338 residues long: Citramalyl-CoA lyase, mitochondrial (338 aa).

A mitochondrion-targeting transit peptide spans 1–20; sequence MALCVLQNAVRGAAALPRLK. 3 residues coordinate substrate: Tyr-48, Lys-55, and Lys-59. Residues Lys-55, Lys-59, and Lys-64 each carry the N6-acetyllysine modification. Residues Lys-80 and Lys-90 each carry the N6-acetyllysine; alternate modification. Residues Lys-80 and Lys-90 each carry the N6-succinyllysine; alternate modification. Position 105 (Arg-105) interacts with substrate. The Mg(2+) site is built by Glu-169 and Asp-204. Residue 270–271 participates in substrate binding; the sequence is IH. Lys-307 is subject to N6-succinyllysine. The active site involves Asp-318.

This sequence belongs to the HpcH/HpaI aldolase family. Citrate lyase beta subunit-like subfamily. As to quaternary structure, homotrimer. Requires Mg(2+) as cofactor.

It localises to the mitochondrion. The catalysed reaction is glyoxylate + acetyl-CoA + H2O = (S)-malate + CoA + H(+). It carries out the reaction propanoyl-CoA + glyoxylate + H2O = 3-methylmalate + CoA + H(+). It catalyses the reaction (3S)-citramalyl-CoA = pyruvate + acetyl-CoA. The enzyme catalyses (S)-malyl-CoA + H2O = (S)-malate + CoA + H(+). In terms of biological role, mitochondrial citramalyl-CoA lyase indirectly involved in the vitamin B12 metabolism. Converts citramalyl-CoA into acetyl-CoA and pyruvate in the C5-dicarboxylate catabolism pathway. The C5-dicarboxylate catabolism pathway is required to detoxify itaconate, a vitamin B12-poisoning metabolite. Also acts as a malate synthase in vitro, converting glyoxylate and acetyl-CoA to malate. Also displays malyl-CoA thioesterase activity. Also acts as a beta-methylmalate synthase in vitro, by mediating conversion of glyoxylate and propionyl-CoA to beta-methylmalate. Also has very weak citramalate synthase activity in vitro. The protein is Citramalyl-CoA lyase, mitochondrial (Clybl) of Rattus norvegicus (Rat).